Reading from the N-terminus, the 195-residue chain is Probable GTP-binding protein EngB (195 aa).

The EngB-type G domain maps to 24 to 195 (ELPEIALAGR…EAWDAILEKL (172 aa)). Residues 32 to 39 (GRSNVGKS), 59 to 63 (GKTQL), 77 to 80 (DVPG), 144 to 147 (TKAD), and 176 to 178 (FSS) each bind GTP. Mg(2+)-binding residues include Ser39 and Thr61.

This sequence belongs to the TRAFAC class TrmE-Era-EngA-EngB-Septin-like GTPase superfamily. EngB GTPase family. The cofactor is Mg(2+).

Necessary for normal cell division and for the maintenance of normal septation. This is Probable GTP-binding protein EngB from Streptococcus pneumoniae (strain JJA).